Reading from the N-terminus, the 347-residue chain is NADH-ubiquinone oxidoreductase chain 2 (347 aa).

The next 11 helical transmembrane spans lie at 2 to 22 (SPYV…MTLI), 25 to 45 (HWLT…PLMT), 56 to 76 (AIKY…SAIF), 96 to 116 (FMMT…FWVP), 122 to 142 (IPLL…ISIF), 149 to 169 (LNMS…GWGG), 178 to 197 (ILAY…IMIY), 202 to 219 (ILNL…FMVL), 241 to 261 (MIII…TGFM), 278 to 298 (LAMM…RIIY), and 326 to 346 (IPTL…FITL).

Belongs to the complex I subunit 2 family.

Its subcellular location is the mitochondrion inner membrane. It catalyses the reaction a ubiquinone + NADH + 5 H(+)(in) = a ubiquinol + NAD(+) + 4 H(+)(out). In terms of biological role, core subunit of the mitochondrial membrane respiratory chain NADH dehydrogenase (Complex I) that is believed to belong to the minimal assembly required for catalysis. Complex I functions in the transfer of electrons from NADH to the respiratory chain. The immediate electron acceptor for the enzyme is believed to be ubiquinone. The protein is NADH-ubiquinone oxidoreductase chain 2 (MT-ND2) of Didelphis virginiana (North American opossum).